Reading from the N-terminus, the 158-residue chain is Protein BTG2 (158 aa).

Residue serine 147 is modified to Phosphoserine; by MAPK1 and MAPK3. Serine 149 is modified (phosphoserine; by MAPK14).

Belongs to the BTG family. In terms of assembly, interacts with PRKCABP. Interacts with CNOT7 and CNOT8; indicative for an association with the CCR4-NOT complex. Interacts with PIN1, inducing mitochondrial depolarization. In terms of processing, phosphorylated at Ser-147 by MAPK1/ERK2 and MAPK3/ERK1, and at Ser-149 by MAPK14, leading to PIN1-binding and mitochondrial depolarization.

Its function is as follows. Anti-proliferative protein; the function is mediated by association with deadenylase subunits of the CCR4-NOT complex. Activates mRNA deadenylation in a CNOT6 and CNOT7-dependent manner. In vitro can inhibit deadenylase activity of CNOT7 and CNOT8. Involved in cell cycle regulation. Could be involved in the growth arrest and differentiation of the neuronal precursors. Modulates transcription regulation mediated by ESR1. Involved in mitochondrial depolarization and neurite outgrowth. The protein is Protein BTG2 (BTG2) of Homo sapiens (Human).